We begin with the raw amino-acid sequence, 363 residues long: Lovastatin nonaketide synthase, enoyl reductase component lovC (363 aa).

Residues 51–54 (SDTK), 174–177 (STAT), 197–200 (SPHN), Y215, 262–263 (LN), T280, and 351–352 (LS) each bind NADP(+). The lovB-binding stretch occupies residues 226-272 (TYTKNNLRYALDCITNVESTTFCFAAIGRAGGHYVSLNPFPEHAATR).

It belongs to the zinc-containing alcohol dehydrogenase family. In terms of assembly, each MAT domain from the lovB homodimer binds one lovC molecule to form the final active lovB-lovC megasynthase complex.

It carries out the reaction holo-[lovastatin nonaketide synthase] + 9 malonyl-CoA + S-adenosyl-L-methionine + 11 NADPH + 19 H(+) = dihydromonacolin L-[lovastatin nonaketide synthase] + S-adenosyl-L-homocysteine + 9 CO2 + 11 NADP(+) + 9 CoA + 6 H2O. It functions in the pathway polyketide biosynthesis; lovastatin biosynthesis. In terms of biological role, trans-enoyl reductase; part of the gene cluster that mediates the biosynthesis of lovastatin (also known as mevinolin, mevacor or monacolin K), a hypolipidemic inhibitor of (3S)-hydroxymethylglutaryl-coenzyme A (HMG-CoA) reductase (HMGR). The first step in the biosynthesis of lovastatin is the production of dihydromonacolin L acid (DML) by the lovastatin nonaketide synthase lovB and the trans-acting enoyl reductase lovC (called the lovB-lovC megasynthase complex) via condensation of one acetyl-CoA unit and 8 malonyl-CoA units. The formation of the LovB/C complex is essential for the integrity of the catalytic chamber to the complete total synthesis of DML acid. Dihydromonacolin L acid is released from lovB by the thioesterase lovG. Next, dihydromonacolin L acid is oxidized by the dihydromonacolin L monooxygenase lovA twice to form monacolin J acid. The 2-methylbutyrate moiety of lovastatin is synthesized by the lovastatin diketide synthase lovF via condensation of one acetyl-CoA unit and one malonyl-CoA unit. Finally, the covalent attachment of this moiety to monacolin J acid is catalyzed by the transesterase lovD to yield lovastatin. LovD has broad substrate specificity and can also convert monacolin J to simvastatin using alpha-dimethylbutanoyl-S-methyl-3-mercaptopropionate (DMB-S-MMP) as the thioester acyl donor, and can also catalyze the reverse reaction and function as hydrolase in vitro. LovD has much higher activity with LovF-bound 2-methylbutanoate than with free diketide substrates. The protein is Lovastatin nonaketide synthase, enoyl reductase component lovC of Aspergillus terreus.